The primary structure comprises 330 residues: MSGTMPLQPTFYGFIGDTTDALIIFEACLSGKLFHVPRRPHDRERQDLIKSGNIFVYEEHASGIKRWTDSISWSPSRILGNYLLYRELEKPFPPGEKKRARGRNGKSTTQSGGITKSRPRNSVPFQTGLEHGNEYTTVPSDDERHLVGSLVDSYDFKEQGLVKKTISITYQGVPHHLVSYYHVEDVKAGLLPSPVDDPRLRGVVPRTELLTGQNFRAPIEEAQHGTYLSGAYMPNMDHQYAPIGFPTHTQQPALQQQPQQQPQPQHQPQLQYQPQPHQHQPQLQYQPQQQHQPQQQYRPQPQHQPQLQYQPQALHPTAHGYPQSYGQTWW.

Disordered regions lie at residues 93–123 and 239–306; these read PPGE…RNSV and QYAP…HQPQ. The segment covering 105–114 has biased composition (polar residues); it reads GKSTTQSGGI. A compositionally biased stretch (low complexity) spans 250-306; that stretch reads QQPALQQQPQQQPQPQHQPQLQYQPQPHQHQPQLQYQPQQQHQPQQQYRPQPQHQPQ.

It belongs to the MIT1/WOR1 family.

The protein resides in the nucleus. In terms of biological role, global transcriptional regulator of pathogenicity. Acts as an activator of parasitic growth. Not essential for colonization or penetration of the root surface, but required for expression of genes encoding effectors that are secreted during infection. Involved in conidiogenesis, but is not required for conidial fitness, overall (colony) morphology, vegetative growth or carbon source utilization. The polypeptide is Global transcription regulator sge1 (Fusarium oxysporum f. sp. lycopersici (strain 4287 / CBS 123668 / FGSC 9935 / NRRL 34936) (Fusarium vascular wilt of tomato)).